The following is a 107-amino-acid chain: MMTESEFIRASEALFEHIEDQIDENGWDFDCRFAGNVLTIEAGDGTQIIVNRHTPNQELWIAAKSGGYHFAEQNGKWLATRDSRDFYDVLNEALSAASGEAVEIAEL.

It belongs to the frataxin family.

Its function is as follows. Involved in iron-sulfur (Fe-S) cluster assembly. May act as a regulator of Fe-S biogenesis. This is Iron-sulfur cluster assembly protein CyaY from Neisseria gonorrhoeae (strain ATCC 700825 / FA 1090).